We begin with the raw amino-acid sequence, 301 residues long: m7GpppX diphosphatase (301 aa).

Residues Glu-154, Lys-176, and 237–248 each bind substrate; that span reads HYQPSFYHLHVH. The short motif at 244–248 is the Histidine triad motif element; sequence HLHVH. His-246 serves as the catalytic Nucleophile.

This sequence belongs to the HIT family.

Its subcellular location is the nucleus. It catalyses the reaction a 5'-end (N(7)-methyl 5'-triphosphoguanosine)-ribonucleoside in mRNA + H2O = N(7)-methyl-GMP + a 5'-end diphospho-ribonucleoside in mRNA + 2 H(+). It carries out the reaction a 5'-end (N(2),N(2),N(7)-trimethyl 5'-triphosphoguanosine)-ribonucleoside in mRNA + H2O = (N(2),N(2),N(7))-trimethyl-GMP + a 5'-end diphospho-ribonucleoside in mRNA + 2 H(+). With respect to regulation, the hydrolytic product 7-methylguanosine diphosphate (m7GDP) efficiently inhibits the decapping scavenger activity and acts as a competitive inhibitor in vitro. Decapping scavenger enzyme that catalyzes the cleavage of a residual cap structure following the degradation of mRNAs of the 3'-&gt;5' exosome-mediated mRNA decay pathway. Hydrolyzes cap analog structures like 7-methylguanosine nucleoside triphosphate (m7GpppG) and tri-methyl guanosine nucleoside triphosphate (m3(2,2,7)GpppG) with up to 2 nucleotide substrates (small capped oligoribonucleotides) and specifically releases 5'-phosphorylated RNA fragments and 7-methylguanosine monophosphate (m7GMP). Does not hydrolyze unmethylated cap analog (GpppG) and shows no decapping activity on intact m7GpppG-capped mRNA molecules. Does not hydrolyze 7-methylguanosine diphosphate (m7GDP) and tri-methylguanosine diphosphate (m3(2,2,7)GDP) to m(7)GMP and m3(2,2,7)GMP, respectively. May also play a role in the 5'-&gt;3 mRNA decay pathway; m7GDP, the downstream product released by the 5'-&gt;3' mRNA mediated decapping activity, may be also converted by dcs-1 to m7GMP. Binds to m7GpppG and strongly to m7GDP. In Ascaris suum (Pig roundworm), this protein is m7GpppX diphosphatase.